We begin with the raw amino-acid sequence, 212 residues long: Thiamine-phosphate synthase (212 aa).

A 4-amino-2-methyl-5-(diphosphooxymethyl)pyrimidine-binding site is contributed by 38–42; sequence QLREK. Residues Asp-71 and Asp-90 each contribute to the Mg(2+) site. A 4-amino-2-methyl-5-(diphosphooxymethyl)pyrimidine-binding site is contributed by Lys-138. Gly-166 provides a ligand contact to 2-[(2R,5Z)-2-carboxy-4-methylthiazol-5(2H)-ylidene]ethyl phosphate.

Belongs to the thiamine-phosphate synthase family. Requires Mg(2+) as cofactor.

It catalyses the reaction 2-[(2R,5Z)-2-carboxy-4-methylthiazol-5(2H)-ylidene]ethyl phosphate + 4-amino-2-methyl-5-(diphosphooxymethyl)pyrimidine + 2 H(+) = thiamine phosphate + CO2 + diphosphate. The catalysed reaction is 2-(2-carboxy-4-methylthiazol-5-yl)ethyl phosphate + 4-amino-2-methyl-5-(diphosphooxymethyl)pyrimidine + 2 H(+) = thiamine phosphate + CO2 + diphosphate. The enzyme catalyses 4-methyl-5-(2-phosphooxyethyl)-thiazole + 4-amino-2-methyl-5-(diphosphooxymethyl)pyrimidine + H(+) = thiamine phosphate + diphosphate. Its pathway is cofactor biosynthesis; thiamine diphosphate biosynthesis; thiamine phosphate from 4-amino-2-methyl-5-diphosphomethylpyrimidine and 4-methyl-5-(2-phosphoethyl)-thiazole: step 1/1. In terms of biological role, condenses 4-methyl-5-(beta-hydroxyethyl)thiazole monophosphate (THZ-P) and 2-methyl-4-amino-5-hydroxymethyl pyrimidine pyrophosphate (HMP-PP) to form thiamine monophosphate (TMP). This chain is Thiamine-phosphate synthase, found in Chlamydia caviae (strain ATCC VR-813 / DSM 19441 / 03DC25 / GPIC) (Chlamydophila caviae).